The primary structure comprises 99 residues: DNA-directed RNA polymerase subunit Rpo11 (99 aa).

Belongs to the archaeal Rpo11/eukaryotic RPB11/RPC19 RNA polymerase subunit family. Part of the RNA polymerase complex. Forms an Rpo3-Rpo10-Rpo11-Rpo12 complex upon coexpression.

It is found in the cytoplasm. It catalyses the reaction RNA(n) + a ribonucleoside 5'-triphosphate = RNA(n+1) + diphosphate. In terms of biological role, DNA-dependent RNA polymerase (RNAP) catalyzes the transcription of DNA into RNA using the four ribonucleoside triphosphates as substrates. The protein is DNA-directed RNA polymerase subunit Rpo11 of Methanocaldococcus jannaschii (strain ATCC 43067 / DSM 2661 / JAL-1 / JCM 10045 / NBRC 100440) (Methanococcus jannaschii).